Consider the following 741-residue polypeptide: Wall-associated receptor kinase 3 (741 aa).

The N-terminal stretch at 1 to 23 is a signal peptide; it reads MKFQEGVFLVVIFFLAYTQLVKG. Over 24–342 the chain is Extracellular; that stretch reads QHQPREDCKL…CTRPEYKRTR (319 aa). 12 N-linked (GlcNAc...) asparagine glycosylation sites follow: N37, N59, N78, N100, N103, N141, N192, N199, N232, N246, N261, and N266. An EGF-like 1 domain is found at 245–292; sequence GNQTCEQAGSTRICGKNSSCYNSTTRNGYICKCNEGYDGNPYRSEGCK. Intrachain disulfides connect C249–C264, C258–C275, C277–C291, C297–C310, C304–C319, and C321–C333. An EGF-like 2; calcium-binding domain is found at 293 to 334; the sequence is DIDECISDTHNCSDPKTCRNRDGGFDCKCPSGYDLNSSMSCT. Residue N303 is glycosylated (N-linked (GlcNAc...) asparagine). A glycan (N-linked (GlcNAc...) asparagine) is linked at N328. The helical transmembrane segment at 343 to 363 threads the bilayer; the sequence is IFLVIIIGVLVLLLAAICIQH. Over 364-741 the chain is Cytoplasmic; it reads ATKQRKYTKL…VAILDIETGR (378 aa). T404 is subject to Phosphothreonine. The region spanning 415–698 is the Protein kinase domain; sequence YDESRILGQG…RVEKTKHKWS (284 aa). Residues 421–429 and K443 contribute to the ATP site; that span reads LGQGGQGTV. Residue Y488 is modified to Phosphotyrosine. The active-site Proton acceptor is D540. Residues T574 and T579 each carry the phosphothreonine modification. Y587 is subject to Phosphotyrosine.

The protein belongs to the protein kinase superfamily. Ser/Thr protein kinase family. Predominantly expressed in green tissues such as stems and leaves.

The protein resides in the membrane. It catalyses the reaction L-seryl-[protein] + ATP = O-phospho-L-seryl-[protein] + ADP + H(+). It carries out the reaction L-threonyl-[protein] + ATP = O-phospho-L-threonyl-[protein] + ADP + H(+). In terms of biological role, serine/threonine-protein kinase that may function as a signaling receptor of extracellular matrix component. Binding to pectin may have significance in the control of cell expansion, morphogenesis and development. The chain is Wall-associated receptor kinase 3 (WAK3) from Arabidopsis thaliana (Mouse-ear cress).